The chain runs to 117 residues: Large ribosomal subunit protein bL17 (117 aa).

The protein belongs to the bacterial ribosomal protein bL17 family. Part of the 50S ribosomal subunit. Contacts protein L32.

In Dehalococcoides mccartyi (strain ATCC BAA-2100 / JCM 16839 / KCTC 5957 / BAV1), this protein is Large ribosomal subunit protein bL17.